Reading from the N-terminus, the 505-residue chain is L-carnitine/gamma-butyrobetaine antiporter (505 aa).

12 helical membrane-spanning segments follow: residues 10-30 (IEPK…WLTV), 50-70 (IWGW…FWLV), 92-112 (IFMM…SIEI), 143-163 (GPLP…FFFV), 195-215 (FYLV…TPLV), 231-251 (LDAI…ACGL), 263-283 (SYLS…SFIM), 316-336 (WTVF…IFLA), 347-367 (LCFG…TVLG), 403-423 (FSTA…VTLI), 446-466 (LLVR…LLAL), and 475-495 (AIIA…LSFI).

The protein belongs to the BCCT transporter (TC 2.A.15) family. CaiT subfamily. Homotrimer.

The protein localises to the cell inner membrane. It carries out the reaction 4-(trimethylamino)butanoate(in) + (R)-carnitine(out) = 4-(trimethylamino)butanoate(out) + (R)-carnitine(in). The protein operates within amine and polyamine metabolism; carnitine metabolism. Catalyzes the exchange of L-carnitine for gamma-butyrobetaine. The chain is L-carnitine/gamma-butyrobetaine antiporter from Citrobacter koseri (strain ATCC BAA-895 / CDC 4225-83 / SGSC4696).